Consider the following 1651-residue polypeptide: Roundabout homolog 1 (1651 aa).

A signal peptide spans Met1–Ala25. Topologically, residues Gln26–Pro897 are extracellular. Residues Pro31–Phe66 are disordered. Polar residues predominate over residues Asp39 to Tyr56. Ig-like C2-type domains lie at Pro68–Glu164, Asp170–Thr257, Pro262–Thr346, Pro351–Thr446, and Pro455–Glu541. The cysteines at positions 89 and 147 are disulfide-linked. Residue Asn160 is glycosylated (N-linked (GlcNAc...) asparagine). 3 disulfide bridges follow: Cys191–Cys240, Cys283–Cys330, and Cys372–Cys428. An N-linked (GlcNAc...) asparagine glycan is attached at Asn463. A disulfide bridge links Cys476 with Cys525. Fibronectin type-III domains follow at residues Ala563–Val657, Val676–Glu773, and Pro778–His874. 3 N-linked (GlcNAc...) asparagine glycosylation sites follow: Asn790, Asn820, and Asn827. A helical transmembrane segment spans residues Ala898 to Leu918. The Cytoplasmic portion of the chain corresponds to Tyr919–Ser1651. Ser940 carries the phosphoserine modification. Residue Thr948 is modified to Phosphothreonine. Residue Tyr1038 is modified to Phosphotyrosine. Ser1055 carries the phosphoserine modification. Tyr1073 bears the Phosphotyrosine mark. A disordered region spans residues Asn1086–Gln1107. Residue Tyr1114 is modified to Phosphotyrosine. 3 disordered regions span residues Pro1137–Glu1337, Glu1352–Phe1397, and Arg1420–Ser1651. The segment covering Gly1147–Gln1163 has biased composition (low complexity). Residues Leu1186–His1196 are compositionally biased toward pro residues. Position 1240 is a phosphothreonine (Thr1240). Residues Tyr1255–Glu1269 show a composition bias toward polar residues. Residues Asp1281 to Arg1293 are compositionally biased toward basic and acidic residues. Over residues Val1296–Pro1307 the composition is skewed to pro residues. Residue Ser1297 is modified to Phosphoserine. Positions Met1322–Met1336 are enriched in acidic residues. The segment covering Ser1384 to Phe1397 has biased composition (low complexity). Residues Pro1438–Ser1451 show a composition bias toward polar residues. Residues Arg1459–His1470 are compositionally biased toward basic residues. Over residues Leu1480–Ile1490 the composition is skewed to pro residues. 2 stretches are compositionally biased toward basic and acidic residues: residues Ala1516–Thr1541 and Asp1549–Pro1573. Polar residues predominate over residues Phe1592 to Pro1601. The segment covering Ser1602 to Ser1614 has biased composition (low complexity). Acidic residues predominate over residues Asn1642 to Ser1651.

The protein belongs to the immunoglobulin superfamily. ROBO family. Homodimer. Dimerization is mediated by the extracellular domain and is independent of SLIT liganding. Interacts with SLIT1. Interacts with SLIT2. Interacts with FLRT3. Interacts with MYO9B (via Rho-GAP domain). Post-translationally, ubiquitinated. May be deubiquitinated by USP33. Expressed in embryonal brain and spinal cord.

It is found in the cell membrane. The protein localises to the cell projection. It localises to the axon. The protein resides in the endoplasmic reticulum-Golgi intermediate compartment membrane. Receptor for SLIT1 and SLIT2 that mediates cellular responses to molecular guidance cues in cellular migration, including axonal navigation at the ventral midline of the neural tube and projection of axons to different regions during neuronal development. Interaction with the intracellular domain of FLRT3 mediates axon attraction towards cells expressing NTN1. In axon growth cones, the silencing of the attractive effect of NTN1 by SLIT2 may require the formation of a ROBO1-DCC complex. Plays a role in the regulation of cell migration via its interaction with MYO9B; inhibits MYO9B-mediated stimulation of RHOA GTPase activity, and thereby leads to increased levels of active, GTP-bound RHOA. May be required for lung development. This Rattus norvegicus (Rat) protein is Roundabout homolog 1 (Robo1).